The sequence spans 181 residues: ADP-ribosylation factor 1 (181 aa).

G2 carries the N-myristoyl glycine lipid modification. The interval 3-16 (NMFANLFKGLFGKK) is important for the stable binding to the membranes. Residues 24 to 32 (GLDAAGKTT), 126 to 129 (NKQD), and A160 contribute to the GTP site.

It belongs to the small GTPase superfamily. Arf family.

Its subcellular location is the golgi apparatus membrane. The enzyme catalyses GTP + H2O = GDP + phosphate + H(+). Its activity is regulated as follows. Alternates between an inactive GDP-bound form and an active GTP-bound form. Activated by a guanine nucleotide-exchange factor (GEF) and inactivated by GTPase-activating protein (GAP). Small GTPase involved in protein trafficking between different compartments. Modulates vesicle budding and uncoating within the Golgi complex. In its GTP-bound form, triggers the recruitment of coatomer proteins to the Golgi membrane. The hydrolysis of ARF1-bound GTP, which is mediated by ARFGAPs proteins, is required for dissociation of coat proteins from Golgi membranes and vesicles. In Xenopus laevis (African clawed frog), this protein is ADP-ribosylation factor 1 (arf1).